Reading from the N-terminus, the 642-residue chain is Zinc finger protein 14 (642 aa).

The region spanning 4–76 is the KRAB domain; sequence VSFEDVAVNF…MVERLCESRK (73 aa). A disordered region spans residues 77–99; it reads GSKCGETTSQMPNVNINKETSTG. The segment covering 81–99 has biased composition (polar residues); that stretch reads GETTSQMPNVNINKETSTG. The C2H2-type 1 zinc finger occupies 103–125; that stretch reads HECSFCGKDFMHHSSLNRHMRSH. A C2H2-type 2; degenerate zinc finger spans residues 141–163; it reads CKRKAVGKTFSYRHCVRKHERTH. The C2H2-type 3 zinc finger occupies 169–191; it reads YECKQCGKAFIYYQPFQRHERIH. The C2H2-type 4; atypical zinc finger occupies 197–217; that stretch reads YECKQCGKTFIYYQSFQKHAH. 15 C2H2-type zinc fingers span residues 223–245, 251–273, 279–301, 307–329, 335–357, 363–385, 391–413, 419–441, 447–469, 475–497, 503–525, 531–553, 559–581, 587–609, and 615–637; these read YECKQCGKTFICYQSFQRHERTH, YECKQCGKAFSCPTYFRTHERTH, YKCKECGKAFSFLSSFRRHKRTH, YECKECGKAFFYSASFQAHVITH, YKCKECGKAFNSSNSCRVHERTH, YECKRCGKSFSWSISLRMHERTH, YECKQCHKTFSFSSSLREHETTH, YECKQCGKAFRFSSSLQRHERTH, YECKQCGKAFRCSSYFRIHERSH, YECKQCGKVFIRSSSFRLHERTH, YECKLCGKAFSFSSSLREHEKIH, FECKRCGKAFLRSSQIRLHERTH, YQCKQCGKAFISSSKFRMHERTH, YRCKQCGKAFRFSSSVRIHERSH, and YECKQCGKAFISSSHFRLHERTH.

Belongs to the krueppel C2H2-type zinc-finger protein family.

It is found in the nucleus. May be involved in transcriptional regulation. The polypeptide is Zinc finger protein 14 (ZNF14) (Macaca fascicularis (Crab-eating macaque)).